Here is a 572-residue protein sequence, read N- to C-terminus: Urease subunit alpha (572 aa).

The 437-residue stretch at 136-572 (GGIDTHIHWI…VPLAQRYFLF (437 aa)) folds into the Urease domain. 3 residues coordinate Ni(2+): His-141, His-143, and Lys-224. Lys-224 carries the N6-carboxylysine modification. Position 226 (His-226) interacts with substrate. 2 residues coordinate Ni(2+): His-253 and His-279. The active-site Proton donor is the His-327. Asp-367 provides a ligand contact to Ni(2+).

This sequence belongs to the metallo-dependent hydrolases superfamily. Urease alpha subunit family. In terms of assembly, heterotrimer of UreA (gamma), UreB (beta) and UreC (alpha) subunits. Three heterotrimers associate to form the active enzyme. Ni cation is required as a cofactor. Carboxylation allows a single lysine to coordinate two nickel ions.

It localises to the cytoplasm. It carries out the reaction urea + 2 H2O + H(+) = hydrogencarbonate + 2 NH4(+). Its pathway is nitrogen metabolism; urea degradation; CO(2) and NH(3) from urea (urease route): step 1/1. The polypeptide is Urease subunit alpha (Actinobacillus pleuropneumoniae serotype 7 (strain AP76)).